The sequence spans 549 residues: Cytoplasmic trehalase (549 aa).

Substrate-binding positions include Arg-168, 175–176 (WD), Asn-212, 221–223 (RSQ), 292–294 (RDE), and Gly-324. Catalysis depends on proton donor/acceptor residues Asp-326 and Glu-509. A substrate-binding site is contributed by Glu-525.

Belongs to the glycosyl hydrolase 37 family. Monomer.

It localises to the cytoplasm. It carries out the reaction alpha,alpha-trehalose + H2O = alpha-D-glucose + beta-D-glucose. It functions in the pathway glycan degradation; trehalose degradation; D-glucose from alpha,alpha-trehalose: step 1/1. Hydrolyzes trehalose to glucose. Could be involved, in cells returning to low osmolarity conditions, in the utilization of the accumulated cytoplasmic trehalose, which was synthesized in response to high osmolarity. This Escherichia fergusonii (strain ATCC 35469 / DSM 13698 / CCUG 18766 / IAM 14443 / JCM 21226 / LMG 7866 / NBRC 102419 / NCTC 12128 / CDC 0568-73) protein is Cytoplasmic trehalase.